The following is a 176-amino-acid chain: Interleukin-7 (176 aa).

Positions 1 to 25 (MFHVSFRYIFGIPPLILVLLPVASS) are cleaved as a signal peptide. Intrachain disulfides connect Cys27-Cys165, Cys58-Cys153, and Cys71-Cys116. Asn94, Asn115, and Asn140 each carry an N-linked (GlcNAc...) asparagine glycan.

The protein belongs to the IL-7/IL-9 family.

The protein localises to the secreted. In terms of biological role, hematopoietic growth factor capable of stimulating the proliferation of lymphoid progenitors. It is important for proliferation during certain stages of B-cell maturation. The polypeptide is Interleukin-7 (IL7) (Sus scrofa (Pig)).